The chain runs to 302 residues: NAD kinase 1 (302 aa).

Asp67 acts as the Proton acceptor in catalysis. NAD(+)-binding positions include 67-68 (DG), Arg72, 148-149 (ND), Lys178, and Asp180.

The protein belongs to the NAD kinase family. A divalent metal cation serves as cofactor.

Its subcellular location is the cytoplasm. The enzyme catalyses NAD(+) + ATP = ADP + NADP(+) + H(+). Its function is as follows. Involved in the regulation of the intracellular balance of NAD and NADP, and is a key enzyme in the biosynthesis of NADP. Catalyzes specifically the phosphorylation on 2'-hydroxyl of the adenosine moiety of NAD to yield NADP. The chain is NAD kinase 1 from Prochlorococcus marinus (strain NATL2A).